Consider the following 348-residue polypeptide: MSFAIAVSPHGHSQKSTSSVMRLTLLALVPGIAAQCYLFGWGVLFQLGLAILTALVSEAVILRMRNYVVSASLKDSSALLTAALIAVAIPPLLPWWMVVLATAFAIIIAKQLYGGLGQNPFNPAMVGYVLLLVSFPAPMTNWMAPQAVTAQLLSPAETAAVIFQGKTSEGLTNYQLKTLVDGSTMATPLDHLKTESKRGHSVDTLVTSANFTAVSHEGWRWINLSFLAGGILLFMLRLIPWQTPVAMLGTLAAASALAHYLAPAQFAMPEIELLSGATMLGAFFIITDPVTSSTTSRGRLVFGALVGGLVFIIRHFGGYPDGVAFSVLLCNILVPLIDKYSQSRVYGH.

Helical transmembrane passes span V20–F39, Y67–V87, and A124–A144. At T187 the chain carries FMN phosphoryl threonine. Helical transmembrane passes span W221–W241, P244–A264, F266–I286, and L300–P320.

Belongs to the NqrB/RnfD family. As to quaternary structure, the complex is composed of six subunits: RnfA, RnfB, RnfC, RnfD, RnfE and RnfG. FMN is required as a cofactor.

The protein resides in the cell inner membrane. Its function is as follows. Part of a membrane-bound complex that couples electron transfer with translocation of ions across the membrane. This chain is Ion-translocating oxidoreductase complex subunit D, found in Tolumonas auensis (strain DSM 9187 / NBRC 110442 / TA 4).